Here is an 81-residue protein sequence, read N- to C-terminus: Cytochrome b559 subunit alpha (81 aa).

A helical membrane pass occupies residues 21 to 35 (VIHSITIPSLFVSGW). His-23 is a heme binding site.

This sequence belongs to the PsbE/PsbF family. Heterodimer of an alpha subunit and a beta subunit. PSII is composed of 1 copy each of membrane proteins PsbA, PsbB, PsbC, PsbD, PsbE, PsbF, PsbH, PsbI, PsbJ, PsbK, PsbL, PsbM, PsbT, PsbX, PsbY, PsbZ, Psb30/Ycf12, at least 3 peripheral proteins of the oxygen-evolving complex and a large number of cofactors. It forms dimeric complexes. The cofactor is heme b.

It localises to the plastid. Its subcellular location is the chloroplast thylakoid membrane. This b-type cytochrome is tightly associated with the reaction center of photosystem II (PSII). PSII is a light-driven water:plastoquinone oxidoreductase that uses light energy to abstract electrons from H(2)O, generating O(2) and a proton gradient subsequently used for ATP formation. It consists of a core antenna complex that captures photons, and an electron transfer chain that converts photonic excitation into a charge separation. This chain is Cytochrome b559 subunit alpha, found in Mesostigma viride (Green alga).